Consider the following 514-residue polypeptide: 1,25-dihydroxyvitamin D(3) 24-hydroxylase, mitochondrial (514 aa).

The N-terminal 35 residues, 1-35 (MSCPIDKRRTLIAFLRRLRDLGQPPRSVTSKASAS), are a transit peptide targeting the mitochondrion. C462 is a binding site for heme.

The protein belongs to the cytochrome P450 family. It depends on heme as a cofactor.

Its subcellular location is the mitochondrion. The catalysed reaction is calcitriol + 2 reduced [adrenodoxin] + O2 + 2 H(+) = calcitetrol + 2 oxidized [adrenodoxin] + H2O. It catalyses the reaction calcitetrol + 2 reduced [adrenodoxin] + O2 + 2 H(+) = (1S)-1,25-dihydroxy-24-oxocalciol + 2 oxidized [adrenodoxin] + 2 H2O. It carries out the reaction (1S)-1,25-dihydroxy-24-oxocalciol + 2 reduced [adrenodoxin] + O2 + 2 H(+) = (1S)-1,23,25-trihydroxy-24-oxocalciol + 2 oxidized [adrenodoxin] + H2O. The enzyme catalyses (1S)-1,23-dihydroxy-24,25,26,27-tetranorcalciol + 2 reduced [adrenodoxin] + O2 + 2 H(+) = (1S)-1-hydroxy-23-oxo-24,25,26,27-tetranorcalciol + 2 oxidized [adrenodoxin] + 2 H2O. The catalysed reaction is (1S)-1-hydroxy-23-oxo-24,25,26,27-tetranorcalciol + 2 reduced [adrenodoxin] + O2 + H(+) = calcitroate + 2 oxidized [adrenodoxin] + H2O. It catalyses the reaction calcidiol + 2 reduced [adrenodoxin] + O2 + 2 H(+) = secalciferol + 2 oxidized [adrenodoxin] + H2O. It carries out the reaction secalciferol + 2 reduced [adrenodoxin] + O2 + 2 H(+) = 25-hydroxy-24-oxocalciol + 2 oxidized [adrenodoxin] + 2 H2O. The enzyme catalyses 25-hydroxy-24-oxocalciol + 2 reduced [adrenodoxin] + O2 + 2 H(+) = 23S,25-dihydroxy-24-oxocholecalciferol + 2 oxidized [adrenodoxin] + H2O. The catalysed reaction is 20S,23-dihydroxycholecalciferol + 2 reduced [adrenodoxin] + O2 + 2 H(+) = 20S,23,25-trihydroxycholecalciferol + 2 oxidized [adrenodoxin] + H2O. It catalyses the reaction 20S,23-dihydroxycholecalciferol + 2 reduced [adrenodoxin] + O2 + 2 H(+) = 20S,23,24-trihydroxycholecalciferol + 2 oxidized [adrenodoxin] + H2O. It carries out the reaction 20S-hydroxycholecalciferol + 2 reduced [adrenodoxin] + O2 + 2 H(+) = 20S,25-dihydroxycholecalciferol + 2 oxidized [adrenodoxin] + H2O. The enzyme catalyses 20S-hydroxycholecalciferol + 2 reduced [adrenodoxin] + O2 + 2 H(+) = 20S,24S-dihydroxycholecalciferol + 2 oxidized [adrenodoxin] + H2O. The catalysed reaction is 20S-hydroxycholecalciferol + 2 reduced [adrenodoxin] + O2 + 2 H(+) = 20S,24R-dihydroxycholecalciferol + 2 oxidized [adrenodoxin] + H2O. A cytochrome P450 monooxygenase with a key role in vitamin D catabolism and calcium homeostasis. Via C24-oxidation pathway, catalyzes the inactivation of both the vitamin D precursor calcidiol (25-hydroxyvitamin D(3)) and the active hormone calcitriol (1-alpha,25-dihydroxyvitamin D(3)). With initial hydroxylation at C-24 (via C24-oxidation pathway), performs a sequential 6-step oxidation of calcitriol leading to the formation of the biliary metabolite calcitroic acid. Hydroxylates at C-24 or C-25 other vitamin D active metabolites, such as CYP11A1-derived secosteroids 20S-hydroxycholecalciferol and 20S,23-dihydroxycholecalciferol. Mechanistically, uses molecular oxygen inserting one oxygen atom into a substrate, and reducing the second into a water molecule, with two electrons provided by NADPH via FDXR/adrenodoxin reductase and FDX1/adrenodoxin. The chain is 1,25-dihydroxyvitamin D(3) 24-hydroxylase, mitochondrial (Cyp24a1) from Rattus norvegicus (Rat).